The primary structure comprises 319 residues: N-acetyllactosaminide alpha-1,3-galactosyltransferase-like 1 (319 aa).

The Cytoplasmic segment spans residues 1–6 (MQYKKE). A helical; Signal-anchor for type II membrane protein transmembrane segment spans residues 7–26 (ALLLMLFAVLLALTQRFSYS). Residues 27–319 (RTKDHLQKMY…IKHIKIAWKP (293 aa)) are Lumenal-facing. N-linked (GlcNAc...) asparagine glycosylation is found at Asn89 and Asn101. Substrate is bound by residues 97-102 (FATGNF), 188-190 (AVN), and 210-213 (HAWW). Catalysis depends on Glu278, which acts as the Nucleophile.

The protein belongs to the glycosyltransferase 6 family. Mn(2+) serves as cofactor.

Its subcellular location is the golgi apparatus. The protein localises to the golgi stack membrane. It catalyses the reaction a beta-D-galactosyl-(1-&gt;4)-N-acetyl-beta-D-glucosaminyl derivative + UDP-alpha-D-galactose = an alpha-D-galactosyl-(1-&gt;3)-beta-D-galactosyl-(1-&gt;4)-N-acetyl-beta-D-glucosaminyl derivative + UDP + H(+). The protein operates within protein modification; protein glycosylation. In terms of biological role, synthesizes the galactose-alpha(1,3)-galactose group by catalyzing the transfer of a galactose residue, with an alpha-1,3 linkage, on terminal lactosaminide (Gal-beta-1,4-GlcNAc-R) disaccharide borne by a glycoprotein or a glycolipid. The polypeptide is N-acetyllactosaminide alpha-1,3-galactosyltransferase-like 1 (Ggta1l1) (Mus musculus (Mouse)).